The following is a 133-amino-acid chain: Small ribosomal subunit protein uS8 (133 aa).

This sequence belongs to the universal ribosomal protein uS8 family. In terms of assembly, part of the 30S ribosomal subunit. Contacts proteins S5 and S12.

Functionally, one of the primary rRNA binding proteins, it binds directly to 16S rRNA central domain where it helps coordinate assembly of the platform of the 30S subunit. This Deinococcus deserti (strain DSM 17065 / CIP 109153 / LMG 22923 / VCD115) protein is Small ribosomal subunit protein uS8.